We begin with the raw amino-acid sequence, 454 residues long: Chromosomal replication initiator protein DnaA (454 aa).

The segment at 1–83 (MTEKEHFFWN…IKVEYVFDEA (83 aa)) is domain I, interacts with DnaA modulators. A domain II region spans residues 83–113 (ALVSETKPTLANNDFSNKREQQTPDLPTLNS). The interval 114–332 (DLNSKYTFDN…GALKDISLVA (219 aa)) is domain III, AAA+ region. ATP-binding residues include glycine 158, glycine 160, lysine 161, and threonine 162. Positions 333 to 454 (NVRQLDTITV…EIDTIKNKIK (122 aa)) are domain IV, binds dsDNA.

Belongs to the DnaA family. In terms of assembly, oligomerizes as a right-handed, spiral filament on DNA at oriC.

It localises to the cytoplasm. Its function is as follows. Plays an essential role in the initiation and regulation of chromosomal replication. ATP-DnaA binds to the origin of replication (oriC) to initiate formation of the DNA replication initiation complex once per cell cycle. Binds the DnaA box (a 9 base pair repeat at the origin) and separates the double-stranded (ds)DNA. Forms a right-handed helical filament on oriC DNA; dsDNA binds to the exterior of the filament while single-stranded (ss)DNA is stabiized in the filament's interior. The ATP-DnaA-oriC complex binds and stabilizes one strand of the AT-rich DNA unwinding element (DUE), permitting loading of DNA polymerase. After initiation quickly degrades to an ADP-DnaA complex that is not apt for DNA replication. Binds acidic phospholipids. This Streptococcus thermophilus (strain ATCC BAA-250 / LMG 18311) protein is Chromosomal replication initiator protein DnaA.